We begin with the raw amino-acid sequence, 287 residues long: Xyloglucan endotransglucosylase protein 1 (287 aa).

The N-terminal stretch at 1 to 28 is a signal peptide; sequence MAFMSFINGFSTLFLVALLASSMMAAKG. The GH16 domain maps to 29–219; that stretch reads GNFYQDFDVT…WTKAPFTAYY (191 aa). The Nucleophile role is filled by glutamate 105. The active-site Proton donor is the glutamate 109. Xyloglucan is bound at residue glutamate 109. N-linked (GlcNAc...) asparagine glycosylation occurs at asparagine 113. Residues 122 to 124, 132 to 134, 198 to 199, and glycine 203 contribute to the xyloglucan site; these read HTN, NRE, and DW. 2 cysteine pairs are disulfide-bonded: cysteine 227/cysteine 231 and cysteine 266/cysteine 280. Arginine 271 serves as a coordination point for xyloglucan.

It belongs to the glycosyl hydrolase 16 family. XTH group 2 subfamily. In terms of processing, contains at least one intrachain disulfide bond essential for its enzymatic activity. In terms of tissue distribution, expressed in fruit pulp. Expressed in leaves, flowers, calyces, stems and fruits. Highest expression in leaves and lowest in fruits.

The protein localises to the secreted. Its subcellular location is the cell wall. The protein resides in the extracellular space. It localises to the apoplast. The catalysed reaction is breaks a beta-(1-&gt;4) bond in the backbone of a xyloglucan and transfers the xyloglucanyl segment on to O-4 of the non-reducing terminal glucose residue of an acceptor, which can be a xyloglucan or an oligosaccharide of xyloglucan.. In terms of biological role, catalyzes xyloglucan endotransglycosylation (XET). Cleaves and religates xyloglucan polymers. Does not catalyze xyloglucan endohydrolysis (XEH). Overexpression in Arabidopsis transgenic plants results in elevated tolerance to abiotic stress, such as salt, ABA (abscisic acid) and drought stresses, and in the production of wider leaves. Overexpression in transgenic tomato plants slows down fruit ripening and softening, and the plants produce larger fruits. Both transgenic plants have larger and more irregular cells. Moreover, the fruits of the transgenic tomato have higher density of cell wall and intercellular spaces. May provide cells with more strength and thickness to maintain structural integrity. Probably involved in cell wall assembly and synthesis in fast growing tissues and in the maintenance of firmness in mature fruits. This Diospyros kaki (Kaki persimmon) protein is Xyloglucan endotransglucosylase protein 1.